A 313-amino-acid chain; its full sequence is Probable cell division protein WhiA (313 aa).

A DNA-binding region (H-T-H motif) is located at residues 274–308 (SLKELGELVPGGPISKSGVNHRLRKLNAYADELRA).

The protein belongs to the WhiA family.

Its function is as follows. Involved in cell division and chromosome segregation. This is Probable cell division protein WhiA from Limosilactobacillus reuteri subsp. reuteri (strain JCM 1112) (Lactobacillus reuteri).